A 140-amino-acid chain; its full sequence is HTH-type transcriptional regulator AdhR (140 aa).

One can recognise an HTH merR-type domain in the interval 1–69 (MNIAQVAKQF…IEALIEYTTL (69 aa)). Positions 3–22 (IAQVAKQFGLTAATLRYYER) form a DNA-binding region, H-T-H motif. Residues 75 to 125 (RTVEARKNILADERQRLIEKRKEIDETIKRLDTKIKDYDGKLRENEAKLKS) adopt a coiled-coil conformation. Residues 120–140 (EAKLKSRPKTESLHGSVEQRR) form a disordered region.

Its function is as follows. Transcriptional regulator involved in the response to aldehyde stress. Binds to the promoter region of the adhA-yraA operon, the yraC and its own promoter region; binding is unchanged in the presence of aldehydes. The protein is HTH-type transcriptional regulator AdhR (adhR) of Bacillus subtilis (strain 168).